The primary structure comprises 206 residues: Small ribosomal subunit protein uS4 (206 aa).

Residues 96–156 (CRLDNVVYRM…EKSSNQLRIV (61 aa)) form the S4 RNA-binding domain.

It belongs to the universal ribosomal protein uS4 family. Part of the 30S ribosomal subunit. Contacts protein S5. The interaction surface between S4 and S5 is involved in control of translational fidelity.

In terms of biological role, one of the primary rRNA binding proteins, it binds directly to 16S rRNA where it nucleates assembly of the body of the 30S subunit. Functionally, with S5 and S12 plays an important role in translational accuracy. This chain is Small ribosomal subunit protein uS4, found in Pseudomonas putida (strain W619).